Here is a 430-residue protein sequence, read N- to C-terminus: L-lysine N6-monooxygenase MbtG (430 aa).

The signal sequence occupies residues 1–21 (MTATLAVIGAGPKAVAVAAKA).

This sequence belongs to the lysine N(6)-hydroxylase/L-ornithine N(5)-oxygenase family. It depends on FAD as a cofactor.

It carries out the reaction L-lysine + NADPH + O2 = N(6)-hydroxy-L-lysine + NADP(+) + H2O. It participates in siderophore biosynthesis; mycobactin biosynthesis. In terms of biological role, flavoprotein monooxygenase required for N-hydroxylation of the two acylated lysine residues during mycobactin assembly, thus producing the hydroxamate groups necessary for iron sequestration. Is also able, but less efficiently, to hydroxylate L-lysine (non acylated) in vitro. The sequence is that of L-lysine N6-monooxygenase MbtG (mbtG) from Mycobacterium sp. (strain MCS).